The chain runs to 1214 residues: MGKKDKNKKGGQDSAAAPQPQQQQKQQQQRQQQPQQLQQPQQLQQPQQLQQPQQQQQQQPHQQQQQSSRQQPSTSSGGSRASGFQQGGQQQKSQDAEGWTAQKKQGKQQVQGWTKQGQQGGHQQGRQGQDGGYQQRPPGQQQGGHQQGRQGQEGGYQQRPPGQQQGGHQQGRQGQEGGYQQRPSGQQQGGHQQGRQGQEGGYQQRPPGQQQGGHQQGRQGQEGGYQQRPSGQQQGGHQQGRQGQEGGYQQRPPGQQQGGHQQGRQGQEGGYQQRPPGQQQGGHEQGRQGQEGGYQQRPSGQQQGGHQQGRQGQEGGYQQRPSGQQQGGHQQGRQGQEGGYQQRPSGQQQGGHQQGRQGQEGGYQQRPPGQQPNQTQSQGQYQSRGPPQQQQAAPLPLPPQPAGSIKRGTIGKPGQVGINYLDLDLSKMPSVAYHYDVKIMPERPKKFYRQAFEQFRVDQLGGAVLAYDGKASCYSVDKLPLNSQNPEVTVTDRNGRTLRYTIEIKETGDSTIDLKSLTTYMNDRIFDKPMRAMQCVEVVLASPCHNKAIRVGRSFFKMSDPNNRHELDDGYEALVGLYQAFMLGDRPFLNVDISHKSFPISMPMIEYLERFSLKAKINNTTNLDYSRRFLEPFLRGINVVYTPPQSFQSAPRVYRVNGLSRAPASSETFEHDGKKVTIASYFHSRNYPLKFPQLHCLNVGSSIKSILLPIELCSIEEGQALNRKDGATQVANMIKYAATSTNVRKRKIMNLLQYFQHNLDPTISRFGIRIANDFIVVSTRVLSPPQVEYHSKRFTMVKNGSWRMDGMKFLEPKPKAHKCAVLYCDPRSGRKMNYTQLNDFGNLIISQGKAVNISLDSDVTYRPFTDDERSLDTIFADLKRSQHDLAIVIIPQFRISYDTIKQKAELQHGILTQCIKQFTVERKCNNQTIGNILLKINSKLNGINHKIKDDPRLPMMKNTMYIGADVTHPSPDQREIPSVVGVAASHDPYGASYNMQYRLQRGALEEIEDMFSITLEHLRVYKEYRNAYPDHIIYYRDGVSDGQFPKIKNEELRCIKQACDKVGCKPKICCVIVVKRHHTRFFPSGDVTTSNKFNNVDPGTVVDRTIVHPNEMQFFMVSHQAIQGTAKPTRYNVIENTGNLDIDLLQQLTYNLCHMFPRCNRSVSYPAPAYLAHLVAARGRVYLTGTNRFLDLKKEYAKRTIVPEFMKKNPMYFV.

The disordered stretch occupies residues 1-412; sequence MGKKDKNKKG…GSIKRGTIGK (412 aa). 2 stretches are compositionally biased toward low complexity: residues 18–93 and 107–117; these read PQPQ…QQKS and KQQVQGWTKQG. Gly residues-rich tracts occupy residues 118–131, 141–154, 164–177, 187–200, 210–223, 233–246, and 256–269; these read QQGG…GQDG and QQGG…GQEG. Positions 270 to 282 are enriched in low complexity; sequence GYQQRPPGQQQGG. Composition is skewed to gly residues over residues 302–315, 325–338, and 348–361; these read QQGG…GQEG. The segment covering 362–394 has biased composition (low complexity); sequence GYQQRPPGQQPNQTQSQGQYQSRGPPQQQQAAP. The 110-residue stretch at 608 to 717 folds into the PAZ domain; that stretch reads LERFSLKAKI…LPIELCSIEE (110 aa). Residues 681-686 form an interaction with guide RNA region; sequence YFHSRN. One can recognise a Piwi domain in the interval 885–1186; sequence LAIVIIPQFR…ARGRVYLTGT (302 aa). A divalent metal cation-binding residues include aspartate 965 and aspartate 1037. Interaction with guide RNA regions lie at residues 1075 to 1076, 1119 to 1127, and 1156 to 1178; these read KR, HQAIQGTAK, and FPRC…VAAR. Histidine 1173 provides a ligand contact to a divalent metal cation.

Belongs to the argonaute family. Ago subfamily. As to quaternary structure, interacts with Fmr1, Dcr-1 and vig to form the RNA-induced silencing complex (RISC), a ribonucleoprotein (RNP) complex involved in translation regulation, other components of the complex are RpL5, RpL11 and Rm62. As part of the RISC complex, interacts with Tudor-SN. Interacts with Taf11. (Microbial infection) Interacts with cricket paralysis virus protein 1A; this interaction may block the RISC activity. The cofactor is Mg(2+). Requires Mn(2+) as cofactor.

Its subcellular location is the nucleus. It is found in the cytoplasm. It localises to the cytoplasmic ribonucleoprotein granule. Its function is as follows. Essential for RNA interference (RNAi); double-stranded RNA induces potent and specific gene silencing. RNAi is mediated by the RNA-induced silencing complex (RISC), a sequence-specific, multicomponent nuclease that destroys or silences messenger RNAs homologous to the silencing trigger. In Drosophila melanogaster (Fruit fly), this protein is Protein argonaute-2.